We begin with the raw amino-acid sequence, 148 residues long: Large ribosomal subunit protein bL9 (148 aa).

The protein belongs to the bacterial ribosomal protein bL9 family.

In terms of biological role, binds to the 23S rRNA. The protein is Large ribosomal subunit protein bL9 of Pseudomonas fluorescens (strain SBW25).